Reading from the N-terminus, the 538-residue chain is Bifunctional purine biosynthesis protein PurH (538 aa).

The region spanning 8–158 is the MGS-like domain; it reads IPAPDKVEIK…KNHAYVTTLT (151 aa).

The protein belongs to the PurH family.

It carries out the reaction (6R)-10-formyltetrahydrofolate + 5-amino-1-(5-phospho-beta-D-ribosyl)imidazole-4-carboxamide = 5-formamido-1-(5-phospho-D-ribosyl)imidazole-4-carboxamide + (6S)-5,6,7,8-tetrahydrofolate. The catalysed reaction is IMP + H2O = 5-formamido-1-(5-phospho-D-ribosyl)imidazole-4-carboxamide. The protein operates within purine metabolism; IMP biosynthesis via de novo pathway; 5-formamido-1-(5-phospho-D-ribosyl)imidazole-4-carboxamide from 5-amino-1-(5-phospho-D-ribosyl)imidazole-4-carboxamide (10-formyl THF route): step 1/1. It participates in purine metabolism; IMP biosynthesis via de novo pathway; IMP from 5-formamido-1-(5-phospho-D-ribosyl)imidazole-4-carboxamide: step 1/1. In Rhizobium johnstonii (strain DSM 114642 / LMG 32736 / 3841) (Rhizobium leguminosarum bv. viciae), this protein is Bifunctional purine biosynthesis protein PurH.